The following is a 492-amino-acid chain: Histone-lysine N-methyltransferase SUVR4 (492 aa).

The interval 112–138 (ETRSASSGSSIQVVQKQPQLSNGDRKR) is disordered. The segment covering 113–133 (TRSASSGSSIQVVQKQPQLSN) has biased composition (polar residues). Zn(2+) is bound by residues Cys196, Cys197, Cys200, Cys204, Cys213, Cys281, Cys285, Cys287, and Cys291. Positions 196–299 (CCANCKGNCL…QCGNRVVQRG (104 aa)) constitute a Pre-SET domain. The SET domain maps to 302–435 (CQLQVYFTQE…AMDELTWDYM (134 aa)). Residues 313–315 (KGW) and 391–392 (NH) each bind S-adenosyl-L-methionine. Residue Cys394 coordinates Zn(2+). Tyr434 is an S-adenosyl-L-methionine binding site. The region spanning 446 to 462 (KAFRCCCGSESCRDRKI) is the Post-SET domain. Positions 450, 452, and 457 each coordinate Zn(2+). Residues 463 to 492 (KGSQGKSIERRKIVSAKKQQGSKEVSKKRK) form a disordered region.

It belongs to the class V-like SAM-binding methyltransferase superfamily. Histone-lysine methyltransferase family. Interacts with ubiquitin.

The protein resides in the nucleus. The protein localises to the chromosome. The catalysed reaction is N(6)-methyl-L-lysyl(9)-[histone H3] + S-adenosyl-L-methionine = N(6),N(6)-dimethyl-L-lysyl(9)-[histone H3] + S-adenosyl-L-homocysteine + H(+). It carries out the reaction N(6),N(6)-dimethyl-L-lysyl(9)-[histone H3] + S-adenosyl-L-methionine = N(6),N(6),N(6)-trimethyl-L-lysyl(9)-[histone H3] + S-adenosyl-L-homocysteine + H(+). Histone methyltransferase that converts monomethylated 'Lys-9' of histone H3 (H3K9me1) to dimethylated 'Lys-9' (H3K9me2) in the absence of bound ubiquitin, and to trimethylated 'Lys-9' (H3K9me3) in the presence of bound ubiquitin. Acts in a locus-specific manner and contributes to the transcriptional silencing of pseudogenes and transposons. H3 'Lys-9' methylation represents a specific tag for epigenetic transcriptional repression. This chain is Histone-lysine N-methyltransferase SUVR4 (SUVR4), found in Arabidopsis thaliana (Mouse-ear cress).